The primary structure comprises 364 residues: Protein leg1b (364 aa).

The signal sequence occupies residues 1–22 (MSEMGFLRSVAAVLLLAVFSHA). A glycan (N-linked (GlcNAc...) asparagine) is linked at Asn70.

The protein belongs to the LEG1 family. As to expression, detected in all tissues tested, with the highest levels in serum (at protein level). At mRNA level, only expressed in liver.

Its subcellular location is the secreted. Involved in early development of liver, exocrine pancreas and intestine, probably through cell cycle regulation. In liver, its function is partially redundant with leg1a function. The sequence is that of Protein leg1b from Danio rerio (Zebrafish).